Reading from the N-terminus, the 176-residue chain is Large ribosomal subunit protein uL6 (176 aa).

The protein belongs to the universal ribosomal protein uL6 family. Part of the 50S ribosomal subunit.

In terms of biological role, this protein binds to the 23S rRNA, and is important in its secondary structure. It is located near the subunit interface in the base of the L7/L12 stalk, and near the tRNA binding site of the peptidyltransferase center. The protein is Large ribosomal subunit protein uL6 of Burkholderia multivorans (strain ATCC 17616 / 249).